Consider the following 340-residue polypeptide: NADH-quinone oxidoreductase subunit H (340 aa).

Helical transmembrane passes span 4-24 (TIGI…PLLI), 78-98 (YLFV…WAVI), 113-133 (VLYL…AGWA), 151-171 (VSYE…AGSM), 184-204 (MLHW…ISGI), 244-264 (SMIL…LSPF), 273-293 (IFFI…FLFV), and 316-336 (VLIP…VAHV).

It belongs to the complex I subunit 1 family. NDH-1 is composed of 14 different subunits. Subunits NuoA, H, J, K, L, M, N constitute the membrane sector of the complex.

It is found in the cell inner membrane. The catalysed reaction is a quinone + NADH + 5 H(+)(in) = a quinol + NAD(+) + 4 H(+)(out). Functionally, NDH-1 shuttles electrons from NADH, via FMN and iron-sulfur (Fe-S) centers, to quinones in the respiratory chain. The immediate electron acceptor for the enzyme in this species is believed to be ubiquinone. Couples the redox reaction to proton translocation (for every two electrons transferred, four hydrogen ions are translocated across the cytoplasmic membrane), and thus conserves the redox energy in a proton gradient. This subunit may bind ubiquinone. The sequence is that of NADH-quinone oxidoreductase subunit H from Legionella pneumophila (strain Lens).